Reading from the N-terminus, the 566-residue chain is Glutamate--tRNA ligase (566 aa).

Positions 105-115 match the 'HIGH' region motif; sequence PNPDGPIHLGN.

It belongs to the class-I aminoacyl-tRNA synthetase family. Glutamate--tRNA ligase type 2 subfamily.

Its subcellular location is the cytoplasm. It carries out the reaction tRNA(Glu) + L-glutamate + ATP = L-glutamyl-tRNA(Glu) + AMP + diphosphate. In terms of biological role, catalyzes the attachment of glutamate to tRNA(Glu) in a two-step reaction: glutamate is first activated by ATP to form Glu-AMP and then transferred to the acceptor end of tRNA(Glu). The polypeptide is Glutamate--tRNA ligase (Sulfurisphaera tokodaii (strain DSM 16993 / JCM 10545 / NBRC 100140 / 7) (Sulfolobus tokodaii)).